The chain runs to 166 residues: NADPH-dependent 7-cyano-7-deazaguanine reductase (166 aa).

Residue cysteine 57 is the Thioimide intermediate of the active site. Aspartate 64 (proton donor) is an active-site residue. Substrate contacts are provided by residues 79 to 81 and 98 to 99; these read VES and HE.

Belongs to the GTP cyclohydrolase I family. QueF type 1 subfamily.

Its subcellular location is the cytoplasm. The catalysed reaction is 7-aminomethyl-7-carbaguanine + 2 NADP(+) = 7-cyano-7-deazaguanine + 2 NADPH + 3 H(+). Its pathway is tRNA modification; tRNA-queuosine biosynthesis. Its function is as follows. Catalyzes the NADPH-dependent reduction of 7-cyano-7-deazaguanine (preQ0) to 7-aminomethyl-7-deazaguanine (preQ1). The chain is NADPH-dependent 7-cyano-7-deazaguanine reductase from Staphylococcus haemolyticus (strain JCSC1435).